The primary structure comprises 304 residues: ADP-polyphosphate phosphotransferase (304 aa).

The protein belongs to the polyphosphate kinase 2 (PPK2) family. Class I subfamily.

It catalyses the reaction [phosphate](n) + ATP = [phosphate](n+1) + ADP. Uses inorganic polyphosphate (polyP) as a donor to convert ADP to ATP. The chain is ADP-polyphosphate phosphotransferase from Pseudomonas aeruginosa (strain ATCC 15692 / DSM 22644 / CIP 104116 / JCM 14847 / LMG 12228 / 1C / PRS 101 / PAO1).